Consider the following 936-residue polypeptide: Isoleucine--tRNA ligase (936 aa).

The short motif at 58–68 is the 'HIGH' region element; the sequence is PYANGRAHLGT. E561 is a binding site for L-isoleucyl-5'-AMP. Positions 602–606 match the 'KMSKS' region motif; the sequence is KMSKS. K605 serves as a coordination point for ATP. 4 residues coordinate Zn(2+): C899, C902, C919, and C922.

This sequence belongs to the class-I aminoacyl-tRNA synthetase family. IleS type 1 subfamily. In terms of assembly, monomer. Requires Zn(2+) as cofactor.

It localises to the cytoplasm. It catalyses the reaction tRNA(Ile) + L-isoleucine + ATP = L-isoleucyl-tRNA(Ile) + AMP + diphosphate. Catalyzes the attachment of isoleucine to tRNA(Ile). As IleRS can inadvertently accommodate and process structurally similar amino acids such as valine, to avoid such errors it has two additional distinct tRNA(Ile)-dependent editing activities. One activity is designated as 'pretransfer' editing and involves the hydrolysis of activated Val-AMP. The other activity is designated 'posttransfer' editing and involves deacylation of mischarged Val-tRNA(Ile). This chain is Isoleucine--tRNA ligase, found in Coxiella burnetii (strain Dugway 5J108-111).